Here is a 62-residue protein sequence, read N- to C-terminus: Venom protein 51.1 (62 aa).

The signal sequence occupies residues 1–25 (MKFFGILLIVTMVVLVMIATTYVES). Disulfide bonds link cysteine 32/cysteine 53, cysteine 39/cysteine 58, and cysteine 43/cysteine 60.

In terms of tissue distribution, expressed by the venom gland.

The protein resides in the secreted. In terms of biological role, neurotoxin. Decreases the action potential of myelinated nerves in mice and frogs. The polypeptide is Venom protein 51.1 (Lychas mucronatus (Chinese swimming scorpion)).